Reading from the N-terminus, the 312-residue chain is Isochorismatase (312 aa).

Residues 229 to 302 enclose the Carrier domain; it reads VFTCENIRKQ…EWQKLLTTRS (74 aa). Residue S263 is modified to O-(pantetheine 4'-phosphoryl)serine.

The protein belongs to the isochorismatase family.

The enzyme catalyses isochorismate + H2O = (2S,3S)-2,3-dihydroxy-2,3-dihydrobenzoate + pyruvate. It functions in the pathway siderophore biosynthesis; bacillibactin biosynthesis. This is Isochorismatase (dhbB) from Bacillus subtilis (strain 168).